Here is a 191-residue protein sequence, read N- to C-terminus: Protein GrpE (191 aa).

Belongs to the GrpE family. In terms of assembly, homodimer.

The protein localises to the cytoplasm. Functionally, participates actively in the response to hyperosmotic and heat shock by preventing the aggregation of stress-denatured proteins, in association with DnaK and GrpE. It is the nucleotide exchange factor for DnaK and may function as a thermosensor. Unfolded proteins bind initially to DnaJ; upon interaction with the DnaJ-bound protein, DnaK hydrolyzes its bound ATP, resulting in the formation of a stable complex. GrpE releases ADP from DnaK; ATP binding to DnaK triggers the release of the substrate protein, thus completing the reaction cycle. Several rounds of ATP-dependent interactions between DnaJ, DnaK and GrpE are required for fully efficient folding. The protein is Protein GrpE of Listeria monocytogenes serotype 1/2a (strain 10403S).